The primary structure comprises 329 residues: Ribosomal RNA small subunit methyltransferase H (329 aa).

S-adenosyl-L-methionine is bound by residues 39-41 (GGY), aspartate 56, phenylalanine 85, aspartate 106, and glutamine 113. Positions 289–308 (SGAIRPTPEEEARNPRARSA) are disordered.

Belongs to the methyltransferase superfamily. RsmH family.

The protein resides in the cytoplasm. The catalysed reaction is cytidine(1402) in 16S rRNA + S-adenosyl-L-methionine = N(4)-methylcytidine(1402) in 16S rRNA + S-adenosyl-L-homocysteine + H(+). Specifically methylates the N4 position of cytidine in position 1402 (C1402) of 16S rRNA. In Novosphingobium aromaticivorans (strain ATCC 700278 / DSM 12444 / CCUG 56034 / CIP 105152 / NBRC 16084 / F199), this protein is Ribosomal RNA small subunit methyltransferase H.